Consider the following 208-residue polypeptide: Uracil phosphoribosyltransferase (208 aa).

5-phospho-alpha-D-ribose 1-diphosphate is bound by residues Arg-78, Arg-103, and Asp-130–Thr-138. Uracil-binding positions include Ile-193 and Gly-198–Ala-200. Asp-199 contributes to the 5-phospho-alpha-D-ribose 1-diphosphate binding site.

The protein belongs to the UPRTase family. The cofactor is Mg(2+).

It carries out the reaction UMP + diphosphate = 5-phospho-alpha-D-ribose 1-diphosphate + uracil. It participates in pyrimidine metabolism; UMP biosynthesis via salvage pathway; UMP from uracil: step 1/1. With respect to regulation, allosterically activated by GTP. In terms of biological role, catalyzes the conversion of uracil and 5-phospho-alpha-D-ribose 1-diphosphate (PRPP) to UMP and diphosphate. In Campylobacter concisus (strain 13826), this protein is Uracil phosphoribosyltransferase.